The chain runs to 316 residues: Apolipoprotein E (316 aa).

A signal peptide spans 1 to 18; the sequence is MKVLWVALVITLLAGCQA. Repeat copies occupy residues 79 to 100, 101 to 122, 123 to 144, 145 to 166, 167 to 188, 189 to 210, 211 to 232, and 233 to 254. The tract at residues 79 to 254 is 8 X 22 AA approximate tandem repeats; it reads VLMDETMKEV…HLEEMREQLE (176 aa). The residue at position 142 (M142) is a Methionine sulfoxide. The LDL and other lipoprotein receptors binding stretch occupies residues 157 to 167; the sequence is HLRKLRKRLLR. Position 161–164 (161–164) interacts with heparin; the sequence is LRKR. Positions 209–289 are lipid-binding and lipoprotein association; sequence AATVGTLASQ…SWFEPLVEDM (81 aa). 228–235 contacts heparin; the sequence is HQKLRGRV. Residues 265–316 are homooligomerization; the sequence is SQMRLQAEAFQARLKSWFEPLVEDMQRQWAGLVEKVQLAMATSSTSAPSENH. Residues 277–289 form a specificity for association with VLDL region; sequence RLKSWFEPLVEDM.

The protein belongs to the apolipoprotein A1/A4/E family. Homotetramer. May interact with ABCA1; functionally associated with ABCA1 in the biogenesis of HDLs. May interact with APP/A4 amyloid-beta peptide; the interaction is extremely stable in vitro but its physiological significance is unclear. May interact with MAPT. May interact with MAP2. In the cerebrospinal fluid, interacts with secreted SORL1. Interacts with PMEL; this allows the loading of PMEL luminal fragment on ILVs to induce fibril nucleation. APOE exists as multiple glycosylated and sialylated glycoforms within cells and in plasma. The extent of glycosylation and sialylation are tissue and context specific. In terms of processing, glycated in plasma VLDL. Post-translationally, phosphorylated by FAM20C in the extracellular medium.

The protein localises to the secreted. Its subcellular location is the extracellular space. It is found in the extracellular matrix. The protein resides in the extracellular vesicle. It localises to the endosome. The protein localises to the multivesicular body. Functionally, APOE is an apolipoprotein, a protein associating with lipid particles, that mainly functions in lipoprotein-mediated lipid transport between organs via the plasma and interstitial fluids. APOE is a core component of plasma lipoproteins and is involved in their production, conversion and clearance. Apolipoproteins are amphipathic molecules that interact both with lipids of the lipoprotein particle core and the aqueous environment of the plasma. As such, APOE associates with chylomicrons, chylomicron remnants, very low density lipoproteins (VLDL) and intermediate density lipoproteins (IDL) but shows a preferential binding to high-density lipoproteins (HDL). It also binds a wide range of cellular receptors including the LDL receptor/LDLR and the very low-density lipoprotein receptor/VLDLR that mediate the cellular uptake of the APOE-containing lipoprotein particles. Finally, APOE also has a heparin-binding activity and binds heparan-sulfate proteoglycans on the surface of cells, a property that supports the capture and the receptor-mediated uptake of APOE-containing lipoproteins by cells. The chain is Apolipoprotein E (APOE) from Lipotes vexillifer (Yangtze river dolphin).